The sequence spans 220 residues: Urease accessory protein UreF (220 aa).

It belongs to the UreF family. In terms of assembly, ureD, UreF and UreG form a complex that acts as a GTP-hydrolysis-dependent molecular chaperone, activating the urease apoprotein by helping to assemble the nickel containing metallocenter of UreC. The UreE protein probably delivers the nickel.

Its subcellular location is the cytoplasm. Its function is as follows. Required for maturation of urease via the functional incorporation of the urease nickel metallocenter. The polypeptide is Urease accessory protein UreF (Jannaschia sp. (strain CCS1)).